The chain runs to 227 residues: uncharacterized protein (227 aa).

Transmembrane regions (helical) follow at residues 27–47, 63–83, 126–146, 153–173, and 186–206; these read AVLPGILIIVFIETGLLFPLL, PAPPVTIGVLAPCVALVAVLG, TIILARFVPIARTFVPVIAGV, VFLGFDIVGGVAWGAGVTLAG, and FQLIILAIVFVSLLPALVSAA.

This sequence belongs to the DedA family.

It is found in the cell membrane. This is an uncharacterized protein from Mycobacterium tuberculosis (strain CDC 1551 / Oshkosh).